Consider the following 512-residue polypeptide: MSLADLIRQIPVLEAAGGSTTSLPVSMISSDSRDVLPGALFIAVRGYSADGHRFIKSAVERGAAAVLCEEIPPVLPDASLPYLRVEDARQALALAARQFYGFASDALHVIGVTGTNGKTTTARLITAMLNACGIRTGYIGTNLCTFGEQQIPLDRTTPEAHILHALFRRMLDSGCSVAVMEVSSHALVLQRVYGITFHAAVFTNLSMEHLDFHKTMQEYAGAKRQLFEQLSPQGFAVINSDDPRAEEMVSKINPEKRFCCTLDQTGRVAGDASRRFSAELIDQSIASATIRLCFPDAQQTISTVLPGQYNVMNLLQAAAVGCGMGLGSPVVAAALDALPGVAGRMERIMDRRRKEFVFVDYAHTPDALFKALSTLNALKSPASRLIVVFGCGGNRDRLKRPEMGRIAVENADLVILTSDNPRDEDPEMIIDEIEKGIRVKNHKRITDRAQAIRTAVALLQPGDVLLVAGKGHEQYQETAGEKSFFSDQETLRNALAEENAGEPEKGAVCKGC.

Position 32 (serine 32) interacts with UDP-N-acetyl-alpha-D-muramoyl-L-alanyl-D-glutamate. 114-120 (GTNGKTT) is a binding site for ATP. UDP-N-acetyl-alpha-D-muramoyl-L-alanyl-D-glutamate-binding positions include 156-157 (TT), serine 183, and arginine 191. Lysine 223 bears the N6-carboxylysine mark. Residues arginine 395, 419–422 (DNPR), glycine 469, and glutamate 473 each bind meso-2,6-diaminopimelate. The Meso-diaminopimelate recognition motif motif lies at 419 to 422 (DNPR).

The protein belongs to the MurCDEF family. MurE subfamily. Mg(2+) serves as cofactor. Carboxylation is probably crucial for Mg(2+) binding and, consequently, for the gamma-phosphate positioning of ATP.

The protein resides in the cytoplasm. It catalyses the reaction UDP-N-acetyl-alpha-D-muramoyl-L-alanyl-D-glutamate + meso-2,6-diaminopimelate + ATP = UDP-N-acetyl-alpha-D-muramoyl-L-alanyl-gamma-D-glutamyl-meso-2,6-diaminopimelate + ADP + phosphate + H(+). Its pathway is cell wall biogenesis; peptidoglycan biosynthesis. In terms of biological role, catalyzes the addition of meso-diaminopimelic acid to the nucleotide precursor UDP-N-acetylmuramoyl-L-alanyl-D-glutamate (UMAG) in the biosynthesis of bacterial cell-wall peptidoglycan. The polypeptide is UDP-N-acetylmuramoyl-L-alanyl-D-glutamate--2,6-diaminopimelate ligase (Chlorobium phaeobacteroides (strain DSM 266 / SMG 266 / 2430)).